Reading from the N-terminus, the 333-residue chain is Transcription factor HHO6 (333 aa).

Positions 189-249 constitute an HTH myb-type domain; the sequence is ALRKQRRCWN…HLQKYRLHIR (61 aa). Positions 220–245 form a DNA-binding region, H-T-H motif; that stretch reads PKQIREHMQEEGLTNDEVKSHLQKYR. Residues 274–333 form a disordered region; sequence DEEETCEGGESLKRSNAQSDSPQGPLQLPSTTTTTGGDSSMEDVEDAKSESFQLERLRSP. Polar residues predominate over residues 287-303; it reads RSNAQSDSPQGPLQLPS. Over residues 319–333 the composition is skewed to basic and acidic residues; it reads DAKSESFQLERLRSP.

The protein resides in the nucleus. In terms of biological role, probable transcription factor involved in phosphate signaling in roots. This is Transcription factor HHO6 from Arabidopsis thaliana (Mouse-ear cress).